We begin with the raw amino-acid sequence, 102 residues long: Small ribosomal subunit protein uS10 (102 aa).

This sequence belongs to the universal ribosomal protein uS10 family. As to quaternary structure, part of the 30S ribosomal subunit.

Its function is as follows. Involved in the binding of tRNA to the ribosomes. This Caldanaerobacter subterraneus subsp. tengcongensis (strain DSM 15242 / JCM 11007 / NBRC 100824 / MB4) (Thermoanaerobacter tengcongensis) protein is Small ribosomal subunit protein uS10.